The sequence spans 307 residues: D-alanine--D-alanine ligase (307 aa).

Positions 105 to 304 (KMLWKGFGLP…FEKLVEKILE (200 aa)) constitute an ATP-grasp domain. 135–190 (VARLGLPLMVKPSREGSSVGLTKVDSADKLKSAVDLALKFDDIVLIEEWLSGDELT) serves as a coordination point for ATP. Positions 258, 271, and 273 each coordinate Mg(2+).

It belongs to the D-alanine--D-alanine ligase family. Mg(2+) is required as a cofactor. It depends on Mn(2+) as a cofactor.

It localises to the cytoplasm. It catalyses the reaction 2 D-alanine + ATP = D-alanyl-D-alanine + ADP + phosphate + H(+). Its pathway is cell wall biogenesis; peptidoglycan biosynthesis. In terms of biological role, cell wall formation. The sequence is that of D-alanine--D-alanine ligase from Actinobacillus succinogenes (strain ATCC 55618 / DSM 22257 / CCUG 43843 / 130Z).